A 238-amino-acid polypeptide reads, in one-letter code: Uracil-DNA glycosylase (238 aa).

The Proton acceptor role is filled by aspartate 81.

Belongs to the uracil-DNA glycosylase (UDG) superfamily. UNG family.

The protein resides in the cytoplasm. The enzyme catalyses Hydrolyzes single-stranded DNA or mismatched double-stranded DNA and polynucleotides, releasing free uracil.. Its function is as follows. Excises uracil residues from the DNA which can arise as a result of misincorporation of dUMP residues by DNA polymerase or due to deamination of cytosine. In Corynebacterium efficiens (strain DSM 44549 / YS-314 / AJ 12310 / JCM 11189 / NBRC 100395), this protein is Uracil-DNA glycosylase.